A 58-amino-acid chain; its full sequence is Microcin J25 (58 aa).

A propeptide spanning residues 1 to 37 (MIKHFHFNKLSSGKKNNVPSPAKGVIQIKKSASQLTK) is cleaved from the precursor. The segment at residues 38–45 (GGAGHVPE) is a cross-link (isoglutamyl glycine isopeptide (Gly-Glu)).

The protein localises to the secreted. Functionally, peptide antibiotic that functions through inhibition of the bacterial DNA-dependent RNA polymerase (RNAP). Inhibits transcription by binding deep within RNAP secondary channel, where it sterically blocks the folding of the trigger loop, which is essential for efficient catalysis. In addition, it also seems to restrict access of nucleotide substrates to the catalytic center, and shows a partially competitive mode of inhibition with them. Exhibits potent bacteriocidal activity against a range of Enterobacteriaceae, including several pathogenic E.coli, Salmonella and Shigella strains. Also acts on the cytoplasmic membrane of Salmonella newport, producing alteration of membrane permeability and disruption of the subsequent gradient dissipation, which inhibits several processes essential for cell viability, such as oxygen consumption. Induces bacterial filamentation in susceptible cells in a non-SOS-dependent way, but this phenotype may result from impaired transcription of genes coding for cell division proteins. This is Microcin J25 (mcjA) from Escherichia coli.